Reading from the N-terminus, the 2655-residue chain is Probable polyketide synthase 42 (2655 aa).

Positions 16-445 (QNGVAVIGVG…GSNCCIILSE (430 aa)) constitute a Ketosynthase family 3 (KS3) domain. Catalysis depends on for beta-ketoacyl synthase activity residues Cys-186, His-325, and His-368. An acyl/malonyl transferase region spans residues 634–667 (GIKSDIMVGHSFGEIACSYCSGMVDFKTLCYLTY). Ser-644 serves as the catalytic For acyl/malonyl transferase activity. The segment at 926–1059 (HPTWKKANKN…ANYSLFKHND (134 aa)) is N-terminal hotdog fold. The PKS/mFAS DH domain maps to 926–1234 (HPTWKKANKN…CKSSIPIIDS (309 aa)). His-970 acts as the Proton acceptor; for dehydratase activity in catalysis. The interval 1074 to 1234 (NYTIISKDEL…CKSSIPIIDS (161 aa)) is C-terminal hotdog fold. Asp-1146 serves as the catalytic Proton donor; for dehydratase activity. The tract at residues 1700-1719 (YNNNNNNNNNNNNNNNNNNN) is disordered. A Carrier domain is found at 2517–2594 (NENNNIGDLL…TTIEIIIKGY (78 aa)). At Ser-2554 the chain carries O-(pantetheine 4'-phosphoryl)serine. The segment at 2612 to 2655 (SVVQKETIKDNNENKDDIKIDMDDKKENLKGKKENIDDKKENNN) is disordered. Over residues 2617-2655 (ETIKDNNENKDDIKIDMDDKKENLKGKKENIDDKKENNN) the composition is skewed to basic and acidic residues. A coiled-coil region spans residues 2618-2655 (TIKDNNENKDDIKIDMDDKKENLKGKKENIDDKKENNN).

It depends on pantetheine 4'-phosphate as a cofactor.

In terms of biological role, probable polyketide synthase. This Dictyostelium discoideum (Social amoeba) protein is Probable polyketide synthase 42 (pks42).